A 155-amino-acid chain; its full sequence is Interleukin-2 (155 aa).

The N-terminal stretch at 1–20 is a signal peptide; sequence MYKMQLLSCIALTLVLVANS. Thr-23 carries an O-linked (GalNAc...) threonine glycan. Cys-79 and Cys-127 are oxidised to a cystine.

Belongs to the IL-2 family.

The protein localises to the secreted. In terms of biological role, cytokine produced by activated CD4-positive helper T-cells and to a lesser extend activated CD8-positive T-cells and natural killer (NK) cells that plays pivotal roles in the immune response and tolerance. Binds to a receptor complex composed of either the high-affinity trimeric IL-2R (IL2RA/CD25, IL2RB/CD122 and IL2RG/CD132) or the low-affinity dimeric IL-2R (IL2RB and IL2RG). Interaction with the receptor leads to oligomerization and conformation changes in the IL-2R subunits resulting in downstream signaling starting with phosphorylation of JAK1 and JAK3. In turn, JAK1 and JAK3 phosphorylate the receptor to form a docking site leading to the phosphorylation of several substrates including STAT5. This process leads to activation of several pathways including STAT, phosphoinositide-3-kinase/PI3K and mitogen-activated protein kinase/MAPK pathways. Functions as a T-cell growth factor and can increase NK-cell cytolytic activity as well. Promotes strong proliferation of activated B-cells and subsequently immunoglobulin production. Plays a pivotal role in regulating the adaptive immune system by controlling the survival and proliferation of regulatory T-cells, which are required for the maintenance of immune tolerance. Moreover, participates in the differentiation and homeostasis of effector T-cell subsets, including Th1, Th2, Th17 as well as memory CD8-positive T-cells. This chain is Interleukin-2 (IL2), found in Halichoerus grypus (Gray seal).